The sequence spans 290 residues: Glycine--tRNA ligase alpha subunit (290 aa).

It belongs to the class-II aminoacyl-tRNA synthetase family. As to quaternary structure, tetramer of two alpha and two beta subunits.

It is found in the cytoplasm. It carries out the reaction tRNA(Gly) + glycine + ATP = glycyl-tRNA(Gly) + AMP + diphosphate. This chain is Glycine--tRNA ligase alpha subunit, found in Syntrophobacter fumaroxidans (strain DSM 10017 / MPOB).